The following is a 117-amino-acid chain: Large ribosomal subunit protein bL20 (117 aa).

Belongs to the bacterial ribosomal protein bL20 family.

In terms of biological role, binds directly to 23S ribosomal RNA and is necessary for the in vitro assembly process of the 50S ribosomal subunit. It is not involved in the protein synthesizing functions of that subunit. In Finegoldia magna (strain ATCC 29328 / DSM 20472 / WAL 2508) (Peptostreptococcus magnus), this protein is Large ribosomal subunit protein bL20.